The primary structure comprises 1188 residues: F-box only protein 38 (1188 aa).

Residues 30–75 (MNQLSHEVLCHIFRYLPLQDIMCMECLSRKLKEAVTLYLRVVRVVD) enclose the F-box domain. An interaction with KLF7 region spans residues 59–119 (KLKEAVTLYL…LHPRYLERRR (61 aa)). 3 short sequence motifs (nuclear export signal) span residues 194-201 (LHLVGVNV), 307-316 (LEVDLGYLII), and 451-460 (LLPSLEFISL). The tract at residues 487–526 (ALVSNQNSNNDDNNAQNNNANIHDNNHHHPDDSDEENDFR) is disordered. Low complexity predominate over residues 491–509 (NQNSNNDDNNAQNNNANIH). Thr-591 bears the Phosphothreonine mark. Ser-598, Ser-600, and Ser-606 each carry phosphoserine. Disordered regions lie at residues 620-666 (RRYS…FPLE), 685-766 (MKAA…MEEG), and 787-909 (RTSR…STSD). 2 stretches are compositionally biased toward basic and acidic residues: residues 621-630 (RYSEREEKTG) and 685-699 (MKAARDIPEKKKNKD). Over residues 703–740 (SCSSTTASTVGNSSSHNTASQSPDFVRTVNSGGSSEPS) the composition is skewed to polar residues. A phosphoserine mark is found at Ser-736 and Ser-740. Positions 787-798 (RTSRCSDEERPS) are enriched in basic and acidic residues. Residues 849-861 (SSQPESCDVQSNE) show a composition bias toward polar residues. Residues 889-900 (TKPRHAMKRKRT) show a composition bias toward basic residues. The Nuclear localization signal signature appears at 896-899 (KRKR).

Part of the SCF (SKP1-CUL1-F-box) E3 ubiquitin-protein ligase complex SCF(FBXO38) composed of CUL1, SKP1, RBX1 and FBXO38. Interacts with KLF7. Interacts with PDCD1/PD-1.

The protein localises to the cytoplasm. The protein resides in the cytosol. It is found in the nucleus. It functions in the pathway protein modification; protein ubiquitination. Functionally, substrate recognition component of a SCF (SKP1-CUL1-F-box protein) E3 ubiquitin-protein ligase complex which mediates the ubiquitination and subsequent proteasomal degradation of PDCD1/PD-1, thereby regulating T-cells-mediated immunity. Required for anti-tumor activity of T-cells by promoting the degradation of PDCD1/PD-1; the PDCD1-mediated inhibitory pathway being exploited by tumors to attenuate anti-tumor immunity and facilitate tumor survival. May indirectly stimulate the activity of transcription factor KLF7, a regulator of neuronal differentiation, without promoting KLF7 ubiquitination. This Homo sapiens (Human) protein is F-box only protein 38.